The primary structure comprises 420 residues: Nucleoporin NUP42 (420 aa).

A C3H1-type zinc finger spans residues 1 to 25 (MTICQFFLQGRCRFGDRCWNEHPGA). The stretch at 14 to 15 (FG) is one FG 1 repeat. Residues 25–111 (ARGAGGARQP…FASPLSDEQK (87 aa)) form a disordered region. The segment covering 42 to 67 (SGNNRRGWNASSQRYSNVIQPSSFPK) has biased composition (polar residues). FG repeat units follow at residues 82-83 (FG), 95-96 (FG), 218-219 (FG), 220-221 (FG), 228-229 (FG), 265-266 (FG), 271-272 (FG), 288-289 (FG), 345-346 (FG), and 364-365 (FG). The segment covering 87-102 (SGASTSRGFGSSQNPF) has biased composition (polar residues). Residues 323–345 (MAASPSGSTTAPPLRSGSSVVGF) are disordered. An interaction with GLE1 region spans residues 365–420 (GGSGISTSVLASGAADNALFTPRDQLMKEELEQFQSQRFTLGKIPLKPPPVELLTV).

Probable component of the nuclear pore complex (NPC). Interacts with nuclear export protein NXF1. Interacts with GLE1. Able to form a heterotrimer with NUP155 and GLE1 in vitro. Interacts with XPO1. O-glycosylated.

Its subcellular location is the nucleus. The protein localises to the nuclear pore complex. The protein resides in the nucleus membrane. Its function is as follows. Required for the export of mRNAs containing poly(A) tails from the nucleus into the cytoplasm. In Mus musculus (Mouse), this protein is Nucleoporin NUP42 (Nup42).